Reading from the N-terminus, the 729-residue chain is MLYKGDTLYLDWLEDGIAELVFDAPGSVNKLDTATVASLGEAIGVLEQQSDLKGLLLRSNKAAFIVGADITEFLSLFLVPEEQLSQWLQFANSVFNRLEDLPVPTIAAVNGYALGGGCECVLATDYRLATPDLRIGLPETKLGIMPGFGGSVRMPRMLGADSALEIIAAGKDVGADQALKIGLVDGVVKAEKLVEGAKAVLRQAINGDLDWKAKRQPKLEPLKLSKIEATMSFTIAKGMVAQTAGKHYPAPITAVKTIEAAARFGREEALNLENKSFVPLAHTNEARALVGIFLNDQYVKGKAKKLTKDVETPKQAAVLGAGIMGGGIAYQSAWKGVPVVMKDINDKSLTLGMTEAAKLLNKQLERGKIDGLKLAGVISTIHPTLDYAGFDRVDVVVEAVVENPKVKKAVLAETEQKVRPDTVLASNTSTIPISELANALERPENFCGMHFFNPVHRMPLVEIIRGEKSSDETIAKVVAWASKMGKTPIVVNDCPGFFVNRVLFPYFAGFSQLLRDGADFRKIDKVMEKQFGWPMGPAYLLDVVGIDTAHHAQAVMAAGFPQRMQKDYRDAIDALFDANRFGQKNGLGFWRYKEDSKGKPKKEEDAVVDDLLAEVSQPKRDFSEEEIIARMMIPMVNEVVRCLEESIIATPAEADMALIYGLGFPPFHGGAFRWLDTLGSAKYLDMAQQYQHLGPLYEVPEGLRNKARHNEPYYPPVEPARPVGDLKTA.

Residues 1 to 189 (MLYKGDTLYL…KIGLVDGVVK (189 aa)) form an enoyl-CoA hydratase/isomerase region. Aspartate 296 is a binding site for substrate. Residues 311 to 729 (ETPKQAAVLG…ARPVGDLKTA (419 aa)) are 3-hydroxyacyl-CoA dehydrogenase. Residues methionine 324, aspartate 343, 400-402 (VVE), lysine 407, and serine 429 contribute to the NAD(+) site. Histidine 450 acts as the For 3-hydroxyacyl-CoA dehydrogenase activity in catalysis. Asparagine 453 contacts NAD(+). The substrate site is built by asparagine 500 and tyrosine 660. The interval 708 to 729 (RHNEPYYPPVEPARPVGDLKTA) is disordered.

In the N-terminal section; belongs to the enoyl-CoA hydratase/isomerase family. This sequence in the C-terminal section; belongs to the 3-hydroxyacyl-CoA dehydrogenase family. In terms of assembly, heterotetramer of two alpha chains (FadB) and two beta chains (FadA).

The catalysed reaction is a (3S)-3-hydroxyacyl-CoA + NAD(+) = a 3-oxoacyl-CoA + NADH + H(+). It catalyses the reaction a (3S)-3-hydroxyacyl-CoA = a (2E)-enoyl-CoA + H2O. It carries out the reaction a 4-saturated-(3S)-3-hydroxyacyl-CoA = a (3E)-enoyl-CoA + H2O. The enzyme catalyses (3S)-3-hydroxybutanoyl-CoA = (3R)-3-hydroxybutanoyl-CoA. The catalysed reaction is a (3Z)-enoyl-CoA = a 4-saturated (2E)-enoyl-CoA. It catalyses the reaction a (3E)-enoyl-CoA = a 4-saturated (2E)-enoyl-CoA. The protein operates within lipid metabolism; fatty acid beta-oxidation. Involved in the aerobic and anaerobic degradation of long-chain fatty acids via beta-oxidation cycle. Catalyzes the formation of 3-oxoacyl-CoA from enoyl-CoA via L-3-hydroxyacyl-CoA. It can also use D-3-hydroxyacyl-CoA and cis-3-enoyl-CoA as substrate. The chain is Fatty acid oxidation complex subunit alpha from Escherichia coli O139:H28 (strain E24377A / ETEC).